We begin with the raw amino-acid sequence, 304 residues long: MEISEARLTHLKELEAESIHIIREVAAEFDNPVMLYSIGKDSSVMLRLALKAFYPGTPPFPLMHVDTTWKFREMIAFRDRMARESGMELIVHINQEGVEQGIGPFTHGSKVHTDVMKTQSLKQAMDQHRFDAAFGGARRDEEKSRAKERVYSFRDRHHRWDPKGQRPELWQLYNGRVHKGESMRIFPLSNWTELDVWQYIYLEDIPIVPLYYAAERPVVDRDGTLIMVDDERMPLEEGEQPRYEKVRFRTLGCYPLTGAIRSEADTLPEIIQEMLLTRTSERQGRVIDHDSAGSMEEKKRQGYF.

This sequence belongs to the PAPS reductase family. CysD subfamily. As to quaternary structure, heterodimer composed of CysD, the smaller subunit, and CysN.

It catalyses the reaction sulfate + ATP + H(+) = adenosine 5'-phosphosulfate + diphosphate. It participates in sulfur metabolism; hydrogen sulfide biosynthesis; sulfite from sulfate: step 1/3. Functionally, with CysN forms the ATP sulfurylase (ATPS) that catalyzes the adenylation of sulfate producing adenosine 5'-phosphosulfate (APS) and diphosphate, the first enzymatic step in sulfur assimilation pathway. APS synthesis involves the formation of a high-energy phosphoric-sulfuric acid anhydride bond driven by GTP hydrolysis by CysN coupled to ATP hydrolysis by CysD. The protein is Sulfate adenylyltransferase subunit 2 of Halorhodospira halophila (strain DSM 244 / SL1) (Ectothiorhodospira halophila (strain DSM 244 / SL1)).